The sequence spans 96 residues: Putative septation protein SpoVG (96 aa).

The protein belongs to the SpoVG family.

In terms of biological role, could be involved in septation. In Clostridium kluyveri (strain ATCC 8527 / DSM 555 / NBRC 12016 / NCIMB 10680 / K1), this protein is Putative septation protein SpoVG.